A 187-amino-acid chain; its full sequence is MYTQNTMKKNWYVTVGAAAALAATVGMGTAMAGTLDTTWKEATLPQVKAMLEKDTGKVSGDTVTYSGKTVHVVAAAVLPGFPFPSFEVHDKKNPTLEIPAGATVDVTFINTNKGFGHSFDITKKGPPYAVMPVIDPIVAGTGFSPVPKDGKFGYTDFTWHPTAGTYYYVCQIPGHAATGMFGKIVVK.

The first 32 residues, 1–32 (MYTQNTMKKNWYVTVGAAAALAATVGMGTAMA), serve as a signal peptide directing secretion. Positions 85-187 (SFEVHDKKNP…TGMFGKIVVK (103 aa)) constitute a Plastocyanin-like domain. Residues H117, C170, H175, and M180 each contribute to the Cu cation site.

In terms of assembly, monomer. Cu cation serves as cofactor.

Its subcellular location is the periplasm. In terms of biological role, electron carrier from cytochrome c552 to the A-type oxidase. The protein is Rusticyanin (rus) of Acidithiobacillus ferrooxidans (strain ATCC 23270 / DSM 14882 / CIP 104768 / NCIMB 8455) (Ferrobacillus ferrooxidans (strain ATCC 23270)).